The chain runs to 336 residues: Holliday junction branch migration complex subunit RuvB (336 aa).

The tract at residues 1 to 175 (MEKYSFESVQ…FGMSFRLQFY (175 aa)) is large ATPase domain (RuvB-L). Residues Leu-14, Arg-15, Gly-56, Lys-59, Thr-60, Thr-61, 122–124 (EDF), Arg-165, Tyr-175, and Arg-212 contribute to the ATP site. Thr-60 lines the Mg(2+) pocket. The segment at 176–253 (EPKELSAIVI…CVRYALNELG (78 aa)) is small ATPAse domain (RuvB-S). The head domain (RuvB-H) stretch occupies residues 256–336 (ELGFDELDLR…IPFLEQKGLF (81 aa)). DNA-binding residues include Arg-310 and Arg-315.

It belongs to the RuvB family. As to quaternary structure, homohexamer. Forms an RuvA(8)-RuvB(12)-Holliday junction (HJ) complex. HJ DNA is sandwiched between 2 RuvA tetramers; dsDNA enters through RuvA and exits via RuvB. An RuvB hexamer assembles on each DNA strand where it exits the tetramer. Each RuvB hexamer is contacted by two RuvA subunits (via domain III) on 2 adjacent RuvB subunits; this complex drives branch migration. In the full resolvosome a probable DNA-RuvA(4)-RuvB(12)-RuvC(2) complex forms which resolves the HJ.

Its subcellular location is the cytoplasm. It carries out the reaction ATP + H2O = ADP + phosphate + H(+). Its function is as follows. The RuvA-RuvB-RuvC complex processes Holliday junction (HJ) DNA during genetic recombination and DNA repair, while the RuvA-RuvB complex plays an important role in the rescue of blocked DNA replication forks via replication fork reversal (RFR). RuvA specifically binds to HJ cruciform DNA, conferring on it an open structure. The RuvB hexamer acts as an ATP-dependent pump, pulling dsDNA into and through the RuvAB complex. RuvB forms 2 homohexamers on either side of HJ DNA bound by 1 or 2 RuvA tetramers; 4 subunits per hexamer contact DNA at a time. Coordinated motions by a converter formed by DNA-disengaged RuvB subunits stimulates ATP hydrolysis and nucleotide exchange. Immobilization of the converter enables RuvB to convert the ATP-contained energy into a lever motion, pulling 2 nucleotides of DNA out of the RuvA tetramer per ATP hydrolyzed, thus driving DNA branch migration. The RuvB motors rotate together with the DNA substrate, which together with the progressing nucleotide cycle form the mechanistic basis for DNA recombination by continuous HJ branch migration. Branch migration allows RuvC to scan DNA until it finds its consensus sequence, where it cleaves and resolves cruciform DNA. The protein is Holliday junction branch migration complex subunit RuvB of Helicobacter hepaticus (strain ATCC 51449 / 3B1).